The following is a 424-amino-acid chain: CinA-like protein (424 aa).

It belongs to the CinA family.

This chain is CinA-like protein, found in Prochlorococcus marinus (strain MIT 9312).